Here is a 740-residue protein sequence, read N- to C-terminus: Elongation factor 2 (740 aa).

The 242-residue stretch at 23-264 folds into the tr-type G domain; it reads AQIRNAGTLA…MIIEHVPPPN (242 aa). Residues 32–39, 98–102, and 152–155 contribute to the GTP site; these read AHVDHGKT, DTPGH, and NKID. At His605 the chain carries Diphthamide.

Belongs to the TRAFAC class translation factor GTPase superfamily. Classic translation factor GTPase family. EF-G/EF-2 subfamily.

Its subcellular location is the cytoplasm. Catalyzes the GTP-dependent ribosomal translocation step during translation elongation. During this step, the ribosome changes from the pre-translocational (PRE) to the post-translocational (POST) state as the newly formed A-site-bound peptidyl-tRNA and P-site-bound deacylated tRNA move to the P and E sites, respectively. Catalyzes the coordinated movement of the two tRNA molecules, the mRNA and conformational changes in the ribosome. The polypeptide is Elongation factor 2 (Pyrobaculum islandicum (strain DSM 4184 / JCM 9189 / GEO3)).